The following is a 290-amino-acid chain: Protease HtpX (290 aa).

A run of 2 helical transmembrane segments spans residues 6–26 (LFLVTNLAVMLVLGVVLNILF) and 36–56 (ISGLLMFCAVFGFGGSFISLL). H143 contacts Zn(2+). The active site involves E144. H147 serves as a coordination point for Zn(2+). A run of 2 helical transmembrane segments spans residues 158-178 (LIQGVVNTFVMFFARIVAGVI) and 200-220 (ITVFVLEMAFGVLASMIVMWF). E225 contacts Zn(2+).

The protein belongs to the peptidase M48B family. Zn(2+) serves as cofactor.

The protein resides in the cell inner membrane. The chain is Protease HtpX from Aeromonas salmonicida (strain A449).